Reading from the N-terminus, the 189-residue chain is Leucine repeat adapter protein 25 (189 aa).

Phosphoserine is present on S28. Positions 55–81 are disordered; that stretch reads LSRAARAPDGPRHAAGSANLGSAAGPR. Over residues 68-79 the composition is skewed to low complexity; the sequence is AAGSANLGSAAG. The LRR repeat unit spans residues 86-114; the sequence is LDSALAALRKEMVGLRQLDMSLLCQLWGL. The segment at 141–174 is disordered; sequence DSSYPPDAGLSDDDEPPDASLPPDPPPLTVPQTH. Positions 159-169 are enriched in pro residues; that stretch reads ASLPPDPPPLT. A Phosphoserine modification is found at S188.

It belongs to the FAM89 family. In terms of assembly, interacts with SKI. Interacts (via LRR repeat) with CDC42BPA (via AGC-kinase C-terminal domain) and CDC42BPB (via AGC-kinase C-terminal domain). Interacts (via LRR repeat) with LIMK1 (via LIM zinc-binding domains). Forms a tripartite complex with CDC42BPA, CDC42BPB and LIMK1.

It localises to the cytoplasm. The protein localises to the cell projection. Its subcellular location is the lamellipodium. Its function is as follows. Negatively regulates TGF-beta-induced signaling; in cooperation with SKI prevents the translocation of SMAD2 from the nucleus to the cytoplasm in response to TGF-beta. Acts as an adapter that mediates the specific recognition of LIMK1 by CDC42BPA and CDC42BPB in the lamellipodia. LRAP25-mediated CDC42BPA/CDC42BPB targeting to LIMK1 and the lamellipodium results in LIMK1 activation and the subsequent phosphorylation of CFL1 which is important for lamellipodial F-actin regulation. The chain is Leucine repeat adapter protein 25 from Rattus norvegicus (Rat).